We begin with the raw amino-acid sequence, 902 residues long: DNA mismatch repair protein MutS (902 aa).

647 to 654 (GPNMGGKS) is an ATP binding site.

Belongs to the DNA mismatch repair MutS family.

Functionally, this protein is involved in the repair of mismatches in DNA. It is possible that it carries out the mismatch recognition step. This protein has a weak ATPase activity. This is DNA mismatch repair protein MutS from Nitrosospira multiformis (strain ATCC 25196 / NCIMB 11849 / C 71).